The chain runs to 279 residues: Phosphatidylglycerol--prolipoprotein diacylglyceryl transferase (279 aa).

4 helical membrane passes run 4–24, 44–64, 76–96, and 104–124; these read IGPL…FLGY, VVFW…VLTS, LYIW…GLTF, and GYPL…GIVA. R126 lines the a 1,2-diacyl-sn-glycero-3-phospho-(1'-sn-glycerol) pocket. Helical transmembrane passes span 182-202, 206-226, and 245-265; these read LTQV…LYWL, PFYG…RSVL, and LGIG…LLSL.

The protein belongs to the Lgt family.

The protein resides in the cell inner membrane. It catalyses the reaction L-cysteinyl-[prolipoprotein] + a 1,2-diacyl-sn-glycero-3-phospho-(1'-sn-glycerol) = an S-1,2-diacyl-sn-glyceryl-L-cysteinyl-[prolipoprotein] + sn-glycerol 1-phosphate + H(+). Its pathway is protein modification; lipoprotein biosynthesis (diacylglyceryl transfer). Catalyzes the transfer of the diacylglyceryl group from phosphatidylglycerol to the sulfhydryl group of the N-terminal cysteine of a prolipoprotein, the first step in the formation of mature lipoproteins. The chain is Phosphatidylglycerol--prolipoprotein diacylglyceryl transferase from Thermus thermophilus (strain ATCC 27634 / DSM 579 / HB8).